A 340-amino-acid chain; its full sequence is Guanine nucleotide-binding protein G(I)/G(S)/G(T) subunit beta-1 (340 aa).

Ser2 is modified (N-acetylserine). Ser2 carries the post-translational modification Phosphoserine. WD repeat units lie at residues 46–94, 95–140, 141–181, 182–223, 224–267, 268–309, and 310–340; these read RTRR…HAIP, LRSS…RELA, GHTG…TTFT, GHTG…QTFT, GHES…YSHD, NIIC…GVLA, and GHDD…KIWN. A Phosphohistidine modification is found at His266.

It belongs to the WD repeat G protein beta family. As to quaternary structure, g proteins are composed of 3 units, alpha, beta and gamma. The heterodimer formed by GNB1 and GNG2 interacts with ARHGEF5. The heterodimer formed by GNB1 and GNG2 interacts with GRK2. Forms a complex with GNAO1 and GNG3. Interacts with ARHGEF18 and RASD2. Forms complexes with TAS2R14 and G-proteins; these complexes play a role in the perception of bitterness. Component of the TAS2R14-GNAI1 complex, consisting of TAS2R14, GNAI1, GNB1 and GNG2. Component of the TAS2R14-GNAT3 complex, consisting of TAS2R14, GNAT3, GNB1 and GNG2. Component of the TAS2R14-GNAS2 complex, consisting of TAS2R14, GNAS2, GNB1 and GNG2. In terms of processing, phosphorylation at His-266 by NDKB contributes to G protein activation by increasing the high energetic phosphate transfer onto GDP.

Its function is as follows. Guanine nucleotide-binding proteins (G proteins) are involved as a modulator or transducer in various transmembrane signaling systems. The beta and gamma chains are required for the GTPase activity, for replacement of GDP by GTP, and for G protein-effector interaction. This Pongo abelii (Sumatran orangutan) protein is Guanine nucleotide-binding protein G(I)/G(S)/G(T) subunit beta-1 (GNB1).